Here is a 229-residue protein sequence, read N- to C-terminus: Large ribosomal subunit protein uL4 (229 aa).

The interval 62–103 (SRRQGTHQVKNRAAVSGSGKKPWKQKGTGRARHSSRRSPIWV) is disordered. Residues 82–97 (KPWKQKGTGRARHSSR) show a composition bias toward basic residues.

This sequence belongs to the universal ribosomal protein uL4 family. In terms of assembly, part of the 50S ribosomal subunit.

Functionally, one of the primary rRNA binding proteins, this protein initially binds near the 5'-end of the 23S rRNA. It is important during the early stages of 50S assembly. It makes multiple contacts with different domains of the 23S rRNA in the assembled 50S subunit and ribosome. In terms of biological role, forms part of the polypeptide exit tunnel. This chain is Large ribosomal subunit protein uL4, found in Mycoplasmopsis synoviae (strain 53) (Mycoplasma synoviae).